The sequence spans 309 residues: Sulfate adenylyltransferase subunit 2 (309 aa).

The protein belongs to the PAPS reductase family. CysD subfamily. Heterodimer composed of CysD, the smaller subunit, and CysN.

The catalysed reaction is sulfate + ATP + H(+) = adenosine 5'-phosphosulfate + diphosphate. Its pathway is sulfur metabolism; hydrogen sulfide biosynthesis; sulfite from sulfate: step 1/3. Functionally, with CysN forms the ATP sulfurylase (ATPS) that catalyzes the adenylation of sulfate producing adenosine 5'-phosphosulfate (APS) and diphosphate, the first enzymatic step in sulfur assimilation pathway. APS synthesis involves the formation of a high-energy phosphoric-sulfuric acid anhydride bond driven by GTP hydrolysis by CysN coupled to ATP hydrolysis by CysD. This chain is Sulfate adenylyltransferase subunit 2, found in Mycolicibacterium vanbaalenii (strain DSM 7251 / JCM 13017 / BCRC 16820 / KCTC 9966 / NRRL B-24157 / PYR-1) (Mycobacterium vanbaalenii).